The chain runs to 552 residues: uncharacterized protein (552 aa).

The 193-residue stretch at 8-200 (KLFADMIIQG…LLCVYEGFLK (193 aa)) folds into the DhaL domain.

This is an uncharacterized protein from Staphylococcus epidermidis (strain ATCC 12228 / FDA PCI 1200).